A 204-amino-acid polypeptide reads, in one-letter code: Protein GrpE (204 aa).

Residues 1–12 are compositionally biased toward basic and acidic residues; that stretch reads MSNQEKKMHEEE. Residues 1 to 37 form a disordered region; that stretch reads MSNQEKKMHEEELQQQETVEADTEAEAEAVGTDADIE.

Belongs to the GrpE family. In terms of assembly, homodimer.

The protein resides in the cytoplasm. Its function is as follows. Participates actively in the response to hyperosmotic and heat shock by preventing the aggregation of stress-denatured proteins, in association with DnaK and GrpE. It is the nucleotide exchange factor for DnaK and may function as a thermosensor. Unfolded proteins bind initially to DnaJ; upon interaction with the DnaJ-bound protein, DnaK hydrolyzes its bound ATP, resulting in the formation of a stable complex. GrpE releases ADP from DnaK; ATP binding to DnaK triggers the release of the substrate protein, thus completing the reaction cycle. Several rounds of ATP-dependent interactions between DnaJ, DnaK and GrpE are required for fully efficient folding. This is Protein GrpE from Vibrio proteolyticus (Aeromonas proteolytica).